Reading from the N-terminus, the 452-residue chain is MKDTIVAQATPIGRGGVGILRISGPLAQEVAKEVLGKELKPRLANYLPFKDQDGTVLDQGIALFFKAPNSFTGEDVLELQGHGGQVILDILLKRILTIKGIRIARAGEFSEQAFLNDKLDLAQAEAIADLIDATSEQAARSALKSLQGEFSNKINQLVDSVIYLRTYVEAAIDFPDEEIDFLADGKIEGHLNDIIRQLNGVRKEAKQGAILREGMKVVIAGRPNAGKSSLLNALAGREAAIVTNIAGTTRDVLREHIHIDGMPLHIIDTAGLREASDEVEKIGIQRAWDEIEQADHVLLMIDSTEQTAEAFKTEWADFLAKLPQNIPVTVIRNKVDLSGEAEGLQELDGFTLIRLSAQTKVGVDLLREHLKKSMGYQSSTEGGFLARRRHLQALETAAEHLERGHIQLTQFFAGELLAEELRMVQNALSEITGQFTSDDLLGNIFSSFCIGK.

Residues Arg-21, Glu-78, and Lys-118 each contribute to the (6S)-5-formyl-5,6,7,8-tetrahydrofolate site. Positions 214–375 (GMKVVIAGRP…LREHLKKSMG (162 aa)) constitute a TrmE-type G domain. Residue Asn-224 participates in K(+) binding. GTP contacts are provided by residues 224-229 (NAGKSS), 243-249 (TNIAGTT), and 268-271 (DTAG). Ser-228 contacts Mg(2+). Thr-243, Ile-245, and Thr-248 together coordinate K(+). Thr-249 contributes to the Mg(2+) binding site. Lys-452 is a (6S)-5-formyl-5,6,7,8-tetrahydrofolate binding site.

Belongs to the TRAFAC class TrmE-Era-EngA-EngB-Septin-like GTPase superfamily. TrmE GTPase family. As to quaternary structure, homodimer. Heterotetramer of two MnmE and two MnmG subunits. K(+) is required as a cofactor.

It is found in the cytoplasm. Functionally, exhibits a very high intrinsic GTPase hydrolysis rate. Involved in the addition of a carboxymethylaminomethyl (cmnm) group at the wobble position (U34) of certain tRNAs, forming tRNA-cmnm(5)s(2)U34. This chain is tRNA modification GTPase MnmE, found in Actinobacillus pleuropneumoniae serotype 3 (strain JL03).